A 273-amino-acid polypeptide reads, in one-letter code: 4-hydroxy-tetrahydrodipicolinate reductase (273 aa).

NAD(+) contacts are provided by residues 12–17 and Glu-38; that span reads GAGGRM. Arg-39 is an NADP(+) binding site. NAD(+)-binding positions include 102 to 104 and 126 to 129; these read GTT and AANF. The active-site Proton donor/acceptor is His-159. Position 160 (His-160) interacts with (S)-2,3,4,5-tetrahydrodipicolinate. Residue Lys-163 is the Proton donor of the active site. 169–170 provides a ligand contact to (S)-2,3,4,5-tetrahydrodipicolinate; sequence GT.

The protein belongs to the DapB family. In terms of assembly, homotetramer.

The protein localises to the cytoplasm. The enzyme catalyses (S)-2,3,4,5-tetrahydrodipicolinate + NAD(+) + H2O = (2S,4S)-4-hydroxy-2,3,4,5-tetrahydrodipicolinate + NADH + H(+). It catalyses the reaction (S)-2,3,4,5-tetrahydrodipicolinate + NADP(+) + H2O = (2S,4S)-4-hydroxy-2,3,4,5-tetrahydrodipicolinate + NADPH + H(+). It participates in amino-acid biosynthesis; L-lysine biosynthesis via DAP pathway; (S)-tetrahydrodipicolinate from L-aspartate: step 4/4. Functionally, catalyzes the conversion of 4-hydroxy-tetrahydrodipicolinate (HTPA) to tetrahydrodipicolinate. This chain is 4-hydroxy-tetrahydrodipicolinate reductase, found in Shigella boydii serotype 18 (strain CDC 3083-94 / BS512).